Here is a 96-residue protein sequence, read N- to C-terminus: Co-chaperonin GroES (96 aa).

Belongs to the GroES chaperonin family. As to quaternary structure, heptamer of 7 subunits arranged in a ring. Interacts with the chaperonin GroEL.

It is found in the cytoplasm. Functionally, together with the chaperonin GroEL, plays an essential role in assisting protein folding. The GroEL-GroES system forms a nano-cage that allows encapsulation of the non-native substrate proteins and provides a physical environment optimized to promote and accelerate protein folding. GroES binds to the apical surface of the GroEL ring, thereby capping the opening of the GroEL channel. This Cupriavidus necator (strain ATCC 17699 / DSM 428 / KCTC 22496 / NCIMB 10442 / H16 / Stanier 337) (Ralstonia eutropha) protein is Co-chaperonin GroES.